We begin with the raw amino-acid sequence, 810 residues long: Cation/H(+) antiporter 18 (810 aa).

Transmembrane regions (helical) follow at residues 29 to 49, 59 to 76, 91 to 111, 126 to 146, 157 to 177, 193 to 213, 223 to 243, 277 to 297, 314 to 334, 343 to 363, 374 to 394, and 406 to 426; these read FALPLAILQIVIVIVLTRVLA, RVIAEVIGGIMLGPSLLG, LTVLETLANLGLLFFLFLAGL, LGIALAGITLPFALGIGSSFV, STAFLVFMGVALSITAFPVLA, LAMSAAAVNDVAAWILLALAI, LVSLWVFLSGCAFVIGASFII, FITDAIGIHSMFGAFVVGVLI, LVSGLFLPLYFVASGLKTNVA, GLLVLVTATACFGKILGTLGV, AITLGFLMNTKGLVELIVLNI, and FAIMVLMALFTTFITTPVVMA. A Phosphoserine modification is found at S804.

Belongs to the monovalent cation:proton antiporter 2 (CPA2) transporter (TC 2.A.37) family. CHX (TC 2.A.37.4) subfamily. As to expression, expressed in roots.

It is found in the membrane. Its function is as follows. May operate as a cation/H(+) antiporter. This Arabidopsis thaliana (Mouse-ear cress) protein is Cation/H(+) antiporter 18 (CHX18).